The sequence spans 122 residues: Large ribosomal subunit protein bL12 (122 aa).

This sequence belongs to the bacterial ribosomal protein bL12 family. In terms of assembly, homodimer. Part of the ribosomal stalk of the 50S ribosomal subunit. Forms a multimeric L10(L12)X complex, where L10 forms an elongated spine to which 2 to 4 L12 dimers bind in a sequential fashion. Binds GTP-bound translation factors.

Its function is as follows. Forms part of the ribosomal stalk which helps the ribosome interact with GTP-bound translation factors. Is thus essential for accurate translation. The sequence is that of Large ribosomal subunit protein bL12 from Bdellovibrio bacteriovorus (strain ATCC 15356 / DSM 50701 / NCIMB 9529 / HD100).